A 459-amino-acid chain; its full sequence is UDP-N-acetylmuramate--L-alanine ligase (459 aa).

118–124 (GTHGKTT) serves as a coordination point for ATP.

The protein belongs to the MurCDEF family.

It is found in the cytoplasm. It catalyses the reaction UDP-N-acetyl-alpha-D-muramate + L-alanine + ATP = UDP-N-acetyl-alpha-D-muramoyl-L-alanine + ADP + phosphate + H(+). The protein operates within cell wall biogenesis; peptidoglycan biosynthesis. Its function is as follows. Cell wall formation. This chain is UDP-N-acetylmuramate--L-alanine ligase, found in Lachnospira eligens (strain ATCC 27750 / DSM 3376 / VPI C15-48 / C15-B4) (Eubacterium eligens).